The primary structure comprises 68 residues: Copper transport protein ATOX1 (68 aa).

In terms of domain architecture, HMA spans 1-63; sequence MPKHEFSVDM…TLEKTGKAVS (63 aa). Residues C12 and C15 each contribute to the Cu cation site. A Phosphoserine modification is found at S47. The residue at position 60 (K60) is an N6-acetyllysine.

Belongs to the ATX1 family. As to quaternary structure, homodimer. Interacts with ATP7B. Interacts with ATP7A. Interacts (via dimer form) with SLC31A1 (via C-terminal domain); this interaction improves ATOX1 stability and controls intracellular Cu(I) levels.

Functionally, binds and deliver cytosolic copper to the copper ATPase proteins. May be important in cellular antioxidant defense. This chain is Copper transport protein ATOX1, found in Canis lupus familiaris (Dog).